Consider the following 155-residue polypeptide: S-ribosylhomocysteine lyase (155 aa).

Positions 54, 58, and 122 each coordinate Fe cation.

This sequence belongs to the LuxS family. As to quaternary structure, homodimer. The cofactor is Fe cation.

The catalysed reaction is S-(5-deoxy-D-ribos-5-yl)-L-homocysteine = (S)-4,5-dihydroxypentane-2,3-dione + L-homocysteine. Its function is as follows. Involved in the synthesis of autoinducer 2 (AI-2) which is secreted by bacteria and is used to communicate both the cell density and the metabolic potential of the environment. The regulation of gene expression in response to changes in cell density is called quorum sensing. Catalyzes the transformation of S-ribosylhomocysteine (RHC) to homocysteine (HC) and 4,5-dihydroxy-2,3-pentadione (DPD). The polypeptide is S-ribosylhomocysteine lyase (Deinococcus geothermalis (strain DSM 11300 / CIP 105573 / AG-3a)).